A 90-amino-acid polypeptide reads, in one-letter code: Histone H1.M6.2 (90 aa).

Residues 1–90 form a disordered region; the sequence is MSDAAVPPKK…KAVKKAPKKK (90 aa). The span at 11–90 shows a compositional bias: basic residues; that stretch reads ASPKKAAAKK…KAVKKAPKKK (80 aa).

The protein localises to the nucleus. The protein resides in the chromosome. This Trypanosoma cruzi protein is Histone H1.M6.2.